Reading from the N-terminus, the 362-residue chain is Peptide chain release factor 1 (362 aa).

The residue at position 236 (Q236) is an N5-methylglutamine.

Belongs to the prokaryotic/mitochondrial release factor family. Methylated by PrmC. Methylation increases the termination efficiency of RF1.

It is found in the cytoplasm. Peptide chain release factor 1 directs the termination of translation in response to the peptide chain termination codons UAG and UAA. This Lactobacillus helveticus (strain DPC 4571) protein is Peptide chain release factor 1.